A 546-amino-acid chain; its full sequence is Chaperonin GroEL 1 (546 aa).

ATP-binding positions include 30–33, lysine 51, 87–91, glycine 415, 479–481, and aspartate 495; these read TLGP, DGTTT, and NAA.

The protein belongs to the chaperonin (HSP60) family. As to quaternary structure, forms a cylinder of 14 subunits composed of two heptameric rings stacked back-to-back. Interacts with the co-chaperonin GroES.

The protein localises to the cytoplasm. It catalyses the reaction ATP + H2O + a folded polypeptide = ADP + phosphate + an unfolded polypeptide.. In terms of biological role, together with its co-chaperonin GroES, plays an essential role in assisting protein folding. The GroEL-GroES system forms a nano-cage that allows encapsulation of the non-native substrate proteins and provides a physical environment optimized to promote and accelerate protein folding. The protein is Chaperonin GroEL 1 of Paraburkholderia xenovorans (strain LB400).